The primary structure comprises 239 residues: UPF0173 metal-dependent hydrolase rrnAC0300 (239 aa).

The protein belongs to the UPF0173 family.

This is UPF0173 metal-dependent hydrolase rrnAC0300 from Haloarcula marismortui (strain ATCC 43049 / DSM 3752 / JCM 8966 / VKM B-1809) (Halobacterium marismortui).